A 718-amino-acid chain; its full sequence is DNA ligase (718 aa).

NAD(+) is bound by residues 44 to 48 (DADYD), 93 to 94 (SL), and E127. K129 serves as the catalytic N6-AMP-lysine intermediate. NAD(+)-binding residues include R150, E186, K302, and K326. Positions 432, 435, 456, and 462 each coordinate Zn(2+). A BRCT domain is found at 640–718 (TAGSPVAGKT…EDEWLALISG (79 aa)).

This sequence belongs to the NAD-dependent DNA ligase family. LigA subfamily. The cofactor is Mg(2+). Mn(2+) serves as cofactor.

The catalysed reaction is NAD(+) + (deoxyribonucleotide)n-3'-hydroxyl + 5'-phospho-(deoxyribonucleotide)m = (deoxyribonucleotide)n+m + AMP + beta-nicotinamide D-nucleotide.. In terms of biological role, DNA ligase that catalyzes the formation of phosphodiester linkages between 5'-phosphoryl and 3'-hydroxyl groups in double-stranded DNA using NAD as a coenzyme and as the energy source for the reaction. It is essential for DNA replication and repair of damaged DNA. The polypeptide is DNA ligase (Rhizobium etli (strain ATCC 51251 / DSM 11541 / JCM 21823 / NBRC 15573 / CFN 42)).